A 619-amino-acid chain; its full sequence is Very-long-chain aldehyde decarbonylase GL1-4 (619 aa).

A run of 5 helical transmembrane segments spans residues 45–65 (IAFS…QIWI), 94–114 (GWDD…LAMP), 126–146 (GAVV…YWFH), 178–198 (FAEH…TIYL), and 325–345 (AWYM…AWIY). One can recognise a Fatty acid hydroxylase domain in the interval 138–272 (VEFLYYWFHR…MPFYDYIYNT (135 aa)).

It belongs to the sterol desaturase family. As to quaternary structure, homodimer.

It is found in the endoplasmic reticulum membrane. It catalyses the reaction a long-chain fatty aldehyde + 2 NADPH + O2 + H(+) = a long-chain alkane + formate + 2 NADP(+) + H2O. Functionally, aldehyde decarbonylase involved in the conversion of aldehydes to alkanes. Core component of a very-long-chain alkane synthesis complex. This chain is Very-long-chain aldehyde decarbonylase GL1-4, found in Oryza sativa subsp. indica (Rice).